A 299-amino-acid chain; its full sequence is Lipoyl synthase (299 aa).

[4Fe-4S] cluster contacts are provided by C34, C39, C45, C60, C64, C67, and S273. The Radical SAM core domain occupies 46-262 (WNKKHATVMI…KYVAYSKGFL (217 aa)).

Belongs to the radical SAM superfamily. Lipoyl synthase family. [4Fe-4S] cluster serves as cofactor.

The protein resides in the cytoplasm. It carries out the reaction [[Fe-S] cluster scaffold protein carrying a second [4Fe-4S](2+) cluster] + N(6)-octanoyl-L-lysyl-[protein] + 2 oxidized [2Fe-2S]-[ferredoxin] + 2 S-adenosyl-L-methionine + 4 H(+) = [[Fe-S] cluster scaffold protein] + N(6)-[(R)-dihydrolipoyl]-L-lysyl-[protein] + 4 Fe(3+) + 2 hydrogen sulfide + 2 5'-deoxyadenosine + 2 L-methionine + 2 reduced [2Fe-2S]-[ferredoxin]. It participates in protein modification; protein lipoylation via endogenous pathway; protein N(6)-(lipoyl)lysine from octanoyl-[acyl-carrier-protein]: step 2/2. Its function is as follows. Catalyzes the radical-mediated insertion of two sulfur atoms into the C-6 and C-8 positions of the octanoyl moiety bound to the lipoyl domains of lipoate-dependent enzymes, thereby converting the octanoylated domains into lipoylated derivatives. The polypeptide is Lipoyl synthase (Ehrlichia canis (strain Jake)).